A 258-amino-acid chain; its full sequence is Large ribosomal subunit protein uL2x (258 aa).

The interval 211-231 is disordered; it reads HGGGNHQHIGHASTVRRDAPP.

It belongs to the universal ribosomal protein uL2 family.

This is Large ribosomal subunit protein uL2x (RPL8C) from Arabidopsis thaliana (Mouse-ear cress).